We begin with the raw amino-acid sequence, 298 residues long: Uricase (298 aa).

Active-site charge relay system residues include K18 and T63. 7 residues coordinate urate: T63, D64, F165, R182, V229, Q230, and N256. Catalysis depends on H258, which acts as the Charge relay system. Positions A296–M298 match the Microbody targeting signal motif.

Belongs to the uricase family. Homotetramer; dimer of dimers.

It is found in the peroxisome. It carries out the reaction urate + O2 + H2O = 5-hydroxyisourate + H2O2. It functions in the pathway purine metabolism; urate degradation; (S)-allantoin from urate: step 1/3. Competitively inhibited by xanthine. Catalyzes the oxidation of uric acid to 5-hydroxyisourate, which is further processed to form (S)-allantoin. This Danio rerio (Zebrafish) protein is Uricase.